A 147-amino-acid chain; its full sequence is Large ribosomal subunit protein uL15 (147 aa).

This sequence belongs to the universal ribosomal protein uL15 family. As to quaternary structure, part of the 50S ribosomal subunit.

Its function is as follows. Binds to the 23S rRNA. This chain is Large ribosomal subunit protein uL15, found in Blochmanniella floridana.